The primary structure comprises 508 residues: Splicing regulatory glutamine/lysine-rich protein 1 (508 aa).

The RRM domain maps to 66–142 (RTVYVGNLNS…RPLKINHSNN (77 aa)). A phosphoserine mark is found at S171 and S184. The tract at residues 173–508 (ISAAIEPESG…ENLSTKTEAV (336 aa)) is disordered. Basic and acidic residues predominate over residues 180 to 189 (ESGKSNERKG). The span at 190–259 (GRSRSHTRSK…KSRSRSHSRD (70 aa)) shows a compositional bias: basic residues. Residues 260 to 355 (KRKDTREKIK…DRSKEIDEKR (96 aa)) are compositionally biased toward basic and acidic residues. T363 carries the phosphothreonine modification. The span at 372-388 (RRSRSSSRERRRRRSRS) shows a compositional bias: basic residues. The segment covering 419–488 (REKERDHISE…DAPRTEENKI (70 aa)) has biased composition (basic and acidic residues). Residues 489 to 508 (QHNGNCQLNEENLSTKTEAV) are compositionally biased toward polar residues. K504 participates in a covalent cross-link: Glycyl lysine isopeptide (Lys-Gly) (interchain with G-Cter in SUMO2).

This sequence belongs to the splicing factor SR family. As to quaternary structure, homodimer. Binds SFRS1, SFRS2, SFRS3 and SFRS6. Interacts with the spliceosome. Interacts with SREK1IP1.

Its subcellular location is the nucleus. In terms of biological role, participates in the regulation of alternative splicing by modulating the activity of other splice facors. Inhibits the splicing activity of SFRS1, SFRS2 and SFRS6. Augments the splicing activity of SFRS3. This chain is Splicing regulatory glutamine/lysine-rich protein 1 (SREK1), found in Homo sapiens (Human).